Here is a 234-residue protein sequence, read N- to C-terminus: Small ribosomal subunit protein uS2 (234 aa).

This sequence belongs to the universal ribosomal protein uS2 family.

The polypeptide is Small ribosomal subunit protein uS2 (Prochlorococcus marinus subsp. pastoris (strain CCMP1986 / NIES-2087 / MED4)).